A 453-amino-acid polypeptide reads, in one-letter code: Bifunctional protein GlmU (453 aa).

The segment at 1 to 225 is pyrophosphorylase; sequence MNIVILAAGT…EWETLGVNSK (225 aa). Residues 6-9, lysine 20, glutamine 71, 76-77, 98-100, glycine 135, glutamate 150, asparagine 165, and asparagine 223 each bind UDP-N-acetyl-alpha-D-glucosamine; these read LAAG, GT, and YGD. Residue aspartate 100 coordinates Mg(2+). Asparagine 223 provides a ligand contact to Mg(2+). The linker stretch occupies residues 226-246; that stretch reads AQLAELERIHQRNVADALLVD. The tract at residues 247 to 453 is N-acetyltransferase; it reads GVTLADPARV…GYVRPVKKKS (207 aa). 2 residues coordinate UDP-N-acetyl-alpha-D-glucosamine: arginine 329 and lysine 347. Histidine 359 acts as the Proton acceptor in catalysis. UDP-N-acetyl-alpha-D-glucosamine contacts are provided by tyrosine 362 and asparagine 373. Acetyl-CoA-binding positions include alanine 376, 382 to 383, serine 401, and alanine 419; that span reads NY.

The protein in the N-terminal section; belongs to the N-acetylglucosamine-1-phosphate uridyltransferase family. In the C-terminal section; belongs to the transferase hexapeptide repeat family. In terms of assembly, homotrimer. It depends on Mg(2+) as a cofactor.

The protein localises to the cytoplasm. It catalyses the reaction alpha-D-glucosamine 1-phosphate + acetyl-CoA = N-acetyl-alpha-D-glucosamine 1-phosphate + CoA + H(+). It carries out the reaction N-acetyl-alpha-D-glucosamine 1-phosphate + UTP + H(+) = UDP-N-acetyl-alpha-D-glucosamine + diphosphate. Its pathway is nucleotide-sugar biosynthesis; UDP-N-acetyl-alpha-D-glucosamine biosynthesis; N-acetyl-alpha-D-glucosamine 1-phosphate from alpha-D-glucosamine 6-phosphate (route II): step 2/2. It participates in nucleotide-sugar biosynthesis; UDP-N-acetyl-alpha-D-glucosamine biosynthesis; UDP-N-acetyl-alpha-D-glucosamine from N-acetyl-alpha-D-glucosamine 1-phosphate: step 1/1. It functions in the pathway bacterial outer membrane biogenesis; LPS lipid A biosynthesis. In terms of biological role, catalyzes the last two sequential reactions in the de novo biosynthetic pathway for UDP-N-acetylglucosamine (UDP-GlcNAc). The C-terminal domain catalyzes the transfer of acetyl group from acetyl coenzyme A to glucosamine-1-phosphate (GlcN-1-P) to produce N-acetylglucosamine-1-phosphate (GlcNAc-1-P), which is converted into UDP-GlcNAc by the transfer of uridine 5-monophosphate (from uridine 5-triphosphate), a reaction catalyzed by the N-terminal domain. The polypeptide is Bifunctional protein GlmU (Burkholderia orbicola (strain MC0-3)).